The following is an 85-amino-acid chain: Coiled-coil-helix-coiled-coil-helix domain-containing protein 7 (85 aa).

The region spanning 13 to 55 is the CHCH domain; it reads INPCLSESDASTRCLDENNYDRERCSTYFLRYKNCRRFWNSIV. 2 consecutive short sequence motifs (cx9C motif) follow at residues 16–26 and 37–47; these read CLSESDASTRC and CSTYFLRYKNC. 2 disulfide bridges follow: cysteine 16-cysteine 47 and cysteine 26-cysteine 37.

Belongs to the CHCHD7 family. As to quaternary structure, monomer.

It is found in the mitochondrion intermembrane space. The polypeptide is Coiled-coil-helix-coiled-coil-helix domain-containing protein 7 (CHCHD7) (Homo sapiens (Human)).